Consider the following 467-residue polypeptide: uncharacterized protein (467 aa).

At lysine 290 the chain carries N6-(pyridoxal phosphate)lysine.

This sequence belongs to the class-III pyridoxal-phosphate-dependent aminotransferase family. Pyridoxal 5'-phosphate serves as cofactor.

This is an uncharacterized protein from Sinorhizobium fredii (strain NBRC 101917 / NGR234).